Consider the following 235-residue polypeptide: Octanoyltransferase (235 aa).

The BPL/LPL catalytic domain occupies 59-235 (PGSSQAVWLL…KKSLTERFGL (177 aa)). Substrate is bound by residues 101-108 (RGGEVTHH), 168-170 (SIG), and 181-183 (GLS). Catalysis depends on Cys199, which acts as the Acyl-thioester intermediate.

Belongs to the LipB family.

Its subcellular location is the cytoplasm. The catalysed reaction is octanoyl-[ACP] + L-lysyl-[protein] = N(6)-octanoyl-L-lysyl-[protein] + holo-[ACP] + H(+). It functions in the pathway protein modification; protein lipoylation via endogenous pathway; protein N(6)-(lipoyl)lysine from octanoyl-[acyl-carrier-protein]: step 1/2. Catalyzes the transfer of endogenously produced octanoic acid from octanoyl-acyl-carrier-protein onto the lipoyl domains of lipoate-dependent enzymes. Lipoyl-ACP can also act as a substrate although octanoyl-ACP is likely to be the physiological substrate. This is Octanoyltransferase from Prochlorococcus marinus (strain MIT 9211).